A 381-amino-acid chain; its full sequence is DNA double-strand break repair protein Mre11 (381 aa).

Mn(2+)-binding residues include D9, H11, D50, and D85. Residue H86 is the Proton donor of the active site. Mn(2+)-binding residues include H156, H187, and H189.

The protein belongs to the MRE11/RAD32 family. Homodimer. Forms a heterotetramer composed of two Mre11 subunits and two Rad50 subunits. Mn(2+) is required as a cofactor.

With respect to regulation, nuclease activity is regulated by Rad50. Functionally, part of the Rad50/Mre11 complex, which is involved in the early steps of DNA double-strand break (DSB) repair. The complex may facilitate opening of the processed DNA ends to aid in the recruitment of HerA and NurA. Mre11 binds to DSB ends and has both double-stranded 3'-5' exonuclease activity and single-stranded endonuclease activity. In Saccharolobus solfataricus (strain ATCC 35092 / DSM 1617 / JCM 11322 / P2) (Sulfolobus solfataricus), this protein is DNA double-strand break repair protein Mre11.